Here is a 35-residue protein sequence, read N- to C-terminus: Mu-theraphotoxin-Pn3b (35 aa).

3 cysteine pairs are disulfide-bonded: cysteine 2–cysteine 16, cysteine 9–cysteine 21, and cysteine 15–cysteine 28.

Belongs to the neurotoxin 10 (Hwtx-1) family. 28 (Jztx-11) subfamily. As to expression, expressed by the venom gland.

It is found in the secreted. Gating-modifier toxin that targets voltage-gated sodium channels with a preferential activity on Nav1.7/SCN9A. On Nav1.7/SCN9A, the toxin acts by shifting the voltage-dependence of activation to more depolarized potentials, whereas it does not cause significant effect on the voltage-dependence of activation on other sodium channels. Minor effects are observed on the voltage-dependence of steady-state fast inactivation for all sodium channels tested (Nav1.1/SCN1A-Nav1.8/SCN10A). By testing the toxin on channel chimera, it has been shown to interact with the S3-S4 linkers in DII and DIV domains of Nav1.7/SCN9A. In vivo, the toxin dose-dependently reduces OD1-induced spontaneous pain behaviors. The sequence is that of Mu-theraphotoxin-Pn3b from Pamphobeteus nigricolor (Giant blue bloom tarantula).